The chain runs to 186 residues: ATP synthase subunit delta (186 aa).

Belongs to the ATPase delta chain family. In terms of assembly, F-type ATPases have 2 components, F(1) - the catalytic core - and F(0) - the membrane proton channel. F(1) has five subunits: alpha(3), beta(3), gamma(1), delta(1), epsilon(1). CF(0) has four main subunits: a(1), b(1), b'(1) and c(10-14). The alpha and beta chains form an alternating ring which encloses part of the gamma chain. F(1) is attached to F(0) by a central stalk formed by the gamma and epsilon chains, while a peripheral stalk is formed by the delta, b and b' chains.

It localises to the cell inner membrane. Functionally, f(1)F(0) ATP synthase produces ATP from ADP in the presence of a proton or sodium gradient. F-type ATPases consist of two structural domains, F(1) containing the extramembraneous catalytic core and F(0) containing the membrane proton channel, linked together by a central stalk and a peripheral stalk. During catalysis, ATP synthesis in the catalytic domain of F(1) is coupled via a rotary mechanism of the central stalk subunits to proton translocation. In terms of biological role, this protein is part of the stalk that links CF(0) to CF(1). It either transmits conformational changes from CF(0) to CF(1) or is implicated in proton conduction. The protein is ATP synthase subunit delta of Cereibacter sphaeroides (strain ATCC 17025 / ATH 2.4.3) (Rhodobacter sphaeroides).